Here is a 155-residue protein sequence, read N- to C-terminus: Mediator of RNA polymerase II transcription subunit 21 (155 aa).

Positions 29–73 (QAPPSVPPGQHRVDTMPEIKGKAASENPQSNPPQPAEPPVPEKIS) are disordered. Residues 39–51 (HRVDTMPEIKGKA) show a composition bias toward basic and acidic residues. Positions 58-69 (SNPPQPAEPPVP) are enriched in pro residues. Residues 75 to 147 (EQFNQDLKEF…EVLLKKVEDK (73 aa)) adopt a coiled-coil conformation.

Belongs to the Mediator complex subunit 21 family. As to quaternary structure, component of the Mediator complex.

It localises to the nucleus. Its function is as follows. Component of the Mediator complex, a coactivator involved in the regulated transcription of nearly all RNA polymerase II-dependent genes. Mediator functions as a bridge to convey information from gene-specific regulatory proteins to the basal RNA polymerase II transcription machinery. Mediator is recruited to promoters by direct interactions with regulatory proteins and serves as a scaffold for the assembly of a functional preinitiation complex with RNA polymerase II and the general transcription factors. The chain is Mediator of RNA polymerase II transcription subunit 21 (SRB7) from Phaeosphaeria nodorum (strain SN15 / ATCC MYA-4574 / FGSC 10173) (Glume blotch fungus).